The following is a 154-amino-acid chain: MKIYEGKLTAEGLKVGIIVSRFNEFITSKLLAGSIDCLKRHGAKEDNIEVCWVPGAFEIPVIAKKMASKGKYDAVICLGAVIRGATPHFDYVSSEVSKGVAHVSLDKEVPVIFGVLTTNTIEQAIERAGTKAGNKGYDAAMSAIEMSNLMKILD.

5-amino-6-(D-ribitylamino)uracil-binding positions include phenylalanine 22, 56–58, and 80–82; these read AFE and AVI. Residue 85 to 86 coordinates (2S)-2-hydroxy-3-oxobutyl phosphate; it reads AT. Histidine 88 (proton donor) is an active-site residue. Residue phenylalanine 113 coordinates 5-amino-6-(D-ribitylamino)uracil. Arginine 127 is a (2S)-2-hydroxy-3-oxobutyl phosphate binding site.

This sequence belongs to the DMRL synthase family.

The enzyme catalyses (2S)-2-hydroxy-3-oxobutyl phosphate + 5-amino-6-(D-ribitylamino)uracil = 6,7-dimethyl-8-(1-D-ribityl)lumazine + phosphate + 2 H2O + H(+). The protein operates within cofactor biosynthesis; riboflavin biosynthesis; riboflavin from 2-hydroxy-3-oxobutyl phosphate and 5-amino-6-(D-ribitylamino)uracil: step 1/2. Functionally, catalyzes the formation of 6,7-dimethyl-8-ribityllumazine by condensation of 5-amino-6-(D-ribitylamino)uracil with 3,4-dihydroxy-2-butanone 4-phosphate. This is the penultimate step in the biosynthesis of riboflavin. This chain is 6,7-dimethyl-8-ribityllumazine synthase, found in Clostridium botulinum (strain 657 / Type Ba4).